The primary structure comprises 195 residues: Nucleoside triphosphate pyrophosphatase (195 aa).

D70 serves as the catalytic Proton acceptor.

Belongs to the Maf family. A divalent metal cation is required as a cofactor.

It localises to the cytoplasm. It catalyses the reaction a ribonucleoside 5'-triphosphate + H2O = a ribonucleoside 5'-phosphate + diphosphate + H(+). It carries out the reaction a 2'-deoxyribonucleoside 5'-triphosphate + H2O = a 2'-deoxyribonucleoside 5'-phosphate + diphosphate + H(+). Its function is as follows. Nucleoside triphosphate pyrophosphatase. May have a dual role in cell division arrest and in preventing the incorporation of modified nucleotides into cellular nucleic acids. This chain is Nucleoside triphosphate pyrophosphatase, found in Cyanothece sp. (strain PCC 7425 / ATCC 29141).